Reading from the N-terminus, the 337-residue chain is Methionyl-tRNA formyltransferase (337 aa).

(6S)-5,6,7,8-tetrahydrofolate is bound at residue 116–119 (SILP).

It belongs to the Fmt family.

It catalyses the reaction L-methionyl-tRNA(fMet) + (6R)-10-formyltetrahydrofolate = N-formyl-L-methionyl-tRNA(fMet) + (6S)-5,6,7,8-tetrahydrofolate + H(+). Attaches a formyl group to the free amino group of methionyl-tRNA(fMet). The formyl group appears to play a dual role in the initiator identity of N-formylmethionyl-tRNA by promoting its recognition by IF2 and preventing the misappropriation of this tRNA by the elongation apparatus. In Desulfovibrio desulfuricans (strain ATCC 27774 / DSM 6949 / MB), this protein is Methionyl-tRNA formyltransferase.